The chain runs to 429 residues: Glutamate-1-semialdehyde 2,1-aminomutase (429 aa).

An N6-(pyridoxal phosphate)lysine modification is found at Lys-265.

It belongs to the class-III pyridoxal-phosphate-dependent aminotransferase family. HemL subfamily. In terms of assembly, homodimer. It depends on pyridoxal 5'-phosphate as a cofactor.

It localises to the cytoplasm. It catalyses the reaction (S)-4-amino-5-oxopentanoate = 5-aminolevulinate. Its pathway is porphyrin-containing compound metabolism; protoporphyrin-IX biosynthesis; 5-aminolevulinate from L-glutamyl-tRNA(Glu): step 2/2. The sequence is that of Glutamate-1-semialdehyde 2,1-aminomutase from Legionella pneumophila (strain Corby).